The following is a 491-amino-acid chain: Cobyric acid synthase (491 aa).

The 190-residue stretch at 250–439 folds into the GATase cobBQ-type domain; the sequence is EVTIAVIRLP…LHGIFDNGAW (190 aa). C331 functions as the Nucleophile in the catalytic mechanism. H431 is an active-site residue.

The protein belongs to the CobB/CobQ family. CobQ subfamily.

Its pathway is cofactor biosynthesis; adenosylcobalamin biosynthesis. Catalyzes amidations at positions B, D, E, and G on adenosylcobyrinic A,C-diamide. NH(2) groups are provided by glutamine, and one molecule of ATP is hydrogenolyzed for each amidation. This Synechococcus sp. (strain ATCC 27144 / PCC 6301 / SAUG 1402/1) (Anacystis nidulans) protein is Cobyric acid synthase.